The chain runs to 353 residues: DNA-repair protein XRCC1 (353 aa).

The segment covering 1–12 has biased composition (polar residues); that stretch reads MSQKRNLPSWMS. The interval 1–57 is disordered; the sequence is MSQKRNLPSWMSSRDPEITPSKSHCKKPKDEGPTEEHNSRNAPSNKSEHAEPSSNTT. The segment covering 28 to 39 has biased composition (basic and acidic residues); that stretch reads PKDEGPTEEHNS. The region spanning 58 to 146 is the BRCT 1 domain; that stretch reads EFSKLMEGVV…KLVDIEQYLM (89 aa). The segment at 150-194 is disordered; the sequence is KPWRKSSSPQDANREKREHLSKKPEKQVEKKTETRGTPSTSSKNR. The segment covering 161 to 183 has biased composition (basic and acidic residues); it reads ANREKREHLSKKPEKQVEKKTET. Residues 184–194 show a composition bias toward polar residues; sequence RGTPSTSSKNR. Residues 240–260 are a coiled coil; sequence AAEGVLTCLQDAIDSLEQKQD. In terms of domain architecture, BRCT 2 spans 266-347; the sequence is ELWSFVPRVV…EEEIELAYRN (82 aa).

As to quaternary structure, homodimer. Interacts with polynucleotide kinase (PNK), DNA polymerase-beta (POLB) and DNA ligase III (LIG3). Interacts with ZDP and ROS1. Binds to various forms of double-stranded DNA (e.g. methylated, unmethylated, with single-nucleotide gap flanked by 3'-phosphate or 5'-phosphate ends).

The protein resides in the nucleus. In terms of biological role, corrects defective DNA strand-break repair and sister chromatid exchange following treatment with ionizing radiation and alkylating agents. Involved in DNA demethylation pathway by stimulating cytosine methylation (5-meC) excision, gap tailoring, and DNA ligation. This Arabidopsis thaliana (Mouse-ear cress) protein is DNA-repair protein XRCC1.